A 314-amino-acid chain; its full sequence is Glutamyl-Q tRNA(Asp) synthetase (314 aa).

L-glutamate is bound by residues 14–18 and Glu50; that span reads RFAPS. Residues 17–27 carry the 'HIGH' region motif; the sequence is PSPTGPLHVGS. Cys106, Cys108, Tyr129, and Cys133 together coordinate Zn(2+). L-glutamate is bound by residues Tyr187 and Arg205. The 'KMSKS' region motif lies at 243 to 247; that stretch reads KLSKR. Lys246 contributes to the ATP binding site.

It belongs to the class-I aminoacyl-tRNA synthetase family. GluQ subfamily. Zn(2+) serves as cofactor.

In terms of biological role, catalyzes the tRNA-independent activation of glutamate in presence of ATP and the subsequent transfer of glutamate onto a tRNA(Asp). Glutamate is transferred on the 2-amino-5-(4,5-dihydroxy-2-cyclopenten-1-yl) moiety of the queuosine in the wobble position of the QUC anticodon. This chain is Glutamyl-Q tRNA(Asp) synthetase, found in Geobacter sulfurreducens (strain ATCC 51573 / DSM 12127 / PCA).